A 291-amino-acid polypeptide reads, in one-letter code: Ribonuclease Z (291 aa).

7 residues coordinate Zn(2+): His-61, His-63, Asp-65, His-66, His-133, Asp-201, and His-257. The active-site Proton acceptor is Asp-65.

The protein belongs to the RNase Z family. As to quaternary structure, homodimer. Requires Zn(2+) as cofactor.

The catalysed reaction is Endonucleolytic cleavage of RNA, removing extra 3' nucleotides from tRNA precursor, generating 3' termini of tRNAs. A 3'-hydroxy group is left at the tRNA terminus and a 5'-phosphoryl group is left at the trailer molecule.. Zinc phosphodiesterase, which displays some tRNA 3'-processing endonuclease activity. Probably involved in tRNA maturation, by removing a 3'-trailer from precursor tRNA. The protein is Ribonuclease Z of Saccharolobus islandicus (strain Y.N.15.51 / Yellowstone #2) (Sulfolobus islandicus).